We begin with the raw amino-acid sequence, 622 residues long: Iron transport multicopper oxidase FET5 (622 aa).

The first 18 residues, 1-18, serve as a signal peptide directing secretion; the sequence is MLFYSFVWSVLAASVALA. Residues 19 to 573 lie on the Extracellular side of the membrane; that stretch reads KTHKLNYTAS…PKGFTTEGYL (555 aa). An N-linked (GlcNAc...) asparagine glycan is attached at asparagine 24. Plastocyanin-like domains are found at residues 43-146 and 192-301; these read IGFN…FIIH and NILF…IQMR. 2 residues coordinate Cu cation: histidine 79 and histidine 81. Asparagine 86 and asparagine 115 each carry an N-linked (GlcNAc...) asparagine glycan. Cu cation-binding residues include histidine 128 and histidine 130. N-linked (GlcNAc...) asparagine glycosylation is found at asparagine 196, asparagine 200, asparagine 246, asparagine 295, and asparagine 364. Residues 392–514 enclose the Plastocyanin-like 3 domain; the sequence is GDNINAQLLK…QGLASVFIEA (123 aa). Residues histidine 418, histidine 421, and histidine 423 each contribute to the Cu cation site. N-linked (GlcNAc...) asparagine glycosylation occurs at asparagine 455. Residues histidine 496, cysteine 497, histidine 498, and histidine 502 each coordinate Cu cation. A helical transmembrane segment spans residues 574–594; sequence ALIISTIIGVWGLYSIAQYGI. Residues 595 to 622 lie on the Cytoplasmic side of the membrane; it reads GEVIPNDEKVYHTLREILAENEIEVSRG.

Belongs to the multicopper oxidase family. As to quaternary structure, interacts with FTH1. The cofactor is Cu cation.

The protein localises to the cell membrane. In terms of biological role, iron transport multicopper oxidase, which is required for Fe(2+) high affinity uptake. May be required to oxidize Fe(2+) and release it from the transporter. Essential component of copper-dependent iron transport. This is Iron transport multicopper oxidase FET5 (FET5) from Saccharomyces cerevisiae (strain ATCC 204508 / S288c) (Baker's yeast).